The primary structure comprises 508 residues: Steroid 17-alpha-hydroxylase/17,20 lyase (508 aa).

Asn202 lines the substrate pocket. A heme-binding site is contributed by Cys442.

It belongs to the cytochrome P450 family. Heme serves as cofactor. In terms of processing, phosphorylation is necessary for 17,20-lyase, but not for 17-alpha-hydroxylase activity.

The protein resides in the endoplasmic reticulum membrane. It is found in the microsome membrane. It carries out the reaction a C21-steroid + reduced [NADPH--hemoprotein reductase] + O2 = a 17alpha-hydroxy-C21-steroid + oxidized [NADPH--hemoprotein reductase] + H2O + H(+). The enzyme catalyses progesterone + reduced [NADPH--hemoprotein reductase] + O2 = 17alpha-hydroxyprogesterone + oxidized [NADPH--hemoprotein reductase] + H2O + H(+). The catalysed reaction is pregnenolone + reduced [NADPH--hemoprotein reductase] + O2 = 17alpha-hydroxypregnenolone + oxidized [NADPH--hemoprotein reductase] + H2O + H(+). It catalyses the reaction 17alpha-hydroxyprogesterone + reduced [NADPH--hemoprotein reductase] + O2 = androst-4-ene-3,17-dione + acetate + oxidized [NADPH--hemoprotein reductase] + H2O + 2 H(+). It carries out the reaction 17alpha-hydroxyprogesterone + reduced [NADPH--hemoprotein reductase] + O2 = 16alpha,17alpha-dihydroxyprogesterone + oxidized [NADPH--hemoprotein reductase] + H2O + H(+). The enzyme catalyses 16alpha,17alpha-dihydroxyprogesterone + reduced [NADPH--hemoprotein reductase] + O2 = 6beta,16alpha,17alpha-trihydroxyprogesterone + oxidized [NADPH--hemoprotein reductase] + H2O + H(+). The catalysed reaction is 17alpha-hydroxypregnenolone + reduced [NADPH--hemoprotein reductase] + O2 = 3beta-hydroxyandrost-5-en-17-one + acetate + oxidized [NADPH--hemoprotein reductase] + H2O + 2 H(+). It catalyses the reaction 16alpha,17alpha-dihydroxypregnenolone + reduced [NADPH--hemoprotein reductase] + O2 = 3beta,16alpha-dihydroxy-androst-5-en-17-one + acetate + oxidized [NADPH--hemoprotein reductase] + H2O + 2 H(+). It carries out the reaction 3beta-hydroxyandrost-5-en-17-one + reduced [NADPH--hemoprotein reductase] + O2 = 3beta,16alpha-dihydroxy-androst-5-en-17-one + oxidized [NADPH--hemoprotein reductase] + H2O + H(+). The enzyme catalyses androst-4-ene-3,17-dione + reduced [NADPH--hemoprotein reductase] + O2 = 16alpha-hydroxyandrost-4-ene-3,17-dione + oxidized [NADPH--hemoprotein reductase] + H2O + H(+). The protein operates within steroid hormone biosynthesis. It participates in steroid biosynthesis; glucocorticoid biosynthesis. Regulated predominantly by intracellular cAMP levels. The 17,20-lyase activity is stimulated by cytochrome b5, which acts as an allosteric effector increasing the Vmax of the lyase activity. In terms of biological role, a cytochrome P450 monooxygenase involved in corticoid and androgen biosynthesis. Catalyzes 17-alpha hydroxylation of C21 steroids, which is common for both pathways. A second oxidative step, required only for androgen synthesis, involves an acyl-carbon cleavage. The 17-alpha hydroxy intermediates, as part of adrenal glucocorticoids biosynthesis pathway, are precursors of cortisol. Hydroxylates steroid hormones, pregnenolone and progesterone to form 17-alpha hydroxy metabolites, followed by the cleavage of the C17-C20 bond to form C19 steroids, dehydroepiandrosterone (DHEA) and androstenedione. Has 16-alpha hydroxylase activity. Catalyzes 16-alpha hydroxylation of 17-alpha hydroxy pregnenolone, followed by the cleavage of the C17-C20 bond to form 16-alpha-hydroxy DHEA. Also 16-alpha hydroxylates androgens, relevant for estriol synthesis. Mechanistically, uses molecular oxygen inserting one oxygen atom into a substrate, and reducing the second into a water molecule, with two electrons provided by NADPH via cytochrome P450 reductase (CPR; NADPH-ferrihemoprotein reductase). This chain is Steroid 17-alpha-hydroxylase/17,20 lyase, found in Homo sapiens (Human).